A 498-amino-acid chain; its full sequence is Glycerol kinase (498 aa).

An ADP-binding site is contributed by T12. Residues T12, T13, and S14 each contribute to the ATP site. T12 provides a ligand contact to sn-glycerol 3-phosphate. R16 lines the ADP pocket. 3 residues coordinate sn-glycerol 3-phosphate: R82, E83, and Y134. R82, E83, and Y134 together coordinate glycerol. The residue at position 230 (H230) is a Phosphohistidine; by HPr. Position 244 (D244) interacts with sn-glycerol 3-phosphate. Residues D244 and Q245 each coordinate glycerol. 2 residues coordinate ADP: T266 and G309. ATP-binding residues include T266, G309, Q313, and G410. ADP contacts are provided by G410 and N414.

It belongs to the FGGY kinase family. In terms of assembly, homotetramer and homodimer (in equilibrium). In terms of processing, the phosphoenolpyruvate-dependent sugar phosphotransferase system (PTS), including enzyme I, and histidine-containing protein (HPr) are required for the phosphorylation, which leads to the activation of the enzyme.

The enzyme catalyses glycerol + ATP = sn-glycerol 3-phosphate + ADP + H(+). Its pathway is polyol metabolism; glycerol degradation via glycerol kinase pathway; sn-glycerol 3-phosphate from glycerol: step 1/1. With respect to regulation, activated by phosphorylation and inhibited by fructose 1,6-bisphosphate (FBP). Key enzyme in the regulation of glycerol uptake and metabolism. Catalyzes the phosphorylation of glycerol to yield sn-glycerol 3-phosphate. The polypeptide is Glycerol kinase (Staphylococcus aureus (strain Mu50 / ATCC 700699)).